We begin with the raw amino-acid sequence, 274 residues long: CDC48-associated ubiquitin-like/zinc finger protein 1 (274 aa).

An AN1-type zinc finger spans residues 12–58 (LDVGKHCAYCRQLDFLPFHCSFCNEDFCSNHRLKEDHHCRWLLEHEE). Zn(2+) is bound by residues C18, C21, C31, C34, C39, H42, H48, and C50. The ubiquitin-like stretch occupies residues 170–266 (NRIYIWCYLV…KDLDTLYLVH (97 aa)). S273 carries the phosphoserine modification.

Interacts (via its ubiquitin-like domain) with CDC48 (via N-terminus). Associates with the 26S proteasome. Specifically interacts with the regulatory particle (RP) subunit RPN2. Exposure to arsenite, a known inducer of protein misfolding resulting in accumulation of polyubiquitinated conjugates, enhances the association with the proteoasome. Binds to ubiquitinated proteins conjugated to a 4 or more molecule ubiquitin chain. Binding to ubiquitinated proteins is zinc-dependent.

It localises to the cytoplasm. The protein resides in the nucleus. Its function is as follows. Promotes efficient arsenite-induced clearance of stress granules (SGs). May have a role in the ubiquitin-proteasome system (UPS) protecting cells from metalloid-induced proteotoxicity. The protein is CDC48-associated ubiquitin-like/zinc finger protein 1 of Saccharomyces cerevisiae (strain ATCC 204508 / S288c) (Baker's yeast).